A 172-amino-acid chain; its full sequence is Ribosome maturation factor RimM (172 aa).

One can recognise a PRC barrel domain in the interval 96–169 (EGYFYHFQLQ…RMEIKLLPGL (74 aa)).

This sequence belongs to the RimM family. As to quaternary structure, binds ribosomal protein uS19.

It localises to the cytoplasm. Functionally, an accessory protein needed during the final step in the assembly of 30S ribosomal subunit, possibly for assembly of the head region. Essential for efficient processing of 16S rRNA. May be needed both before and after RbfA during the maturation of 16S rRNA. It has affinity for free ribosomal 30S subunits but not for 70S ribosomes. The polypeptide is Ribosome maturation factor RimM (Syntrophomonas wolfei subsp. wolfei (strain DSM 2245B / Goettingen)).